Here is a 425-residue protein sequence, read N- to C-terminus: UPF0597 protein VF_0641 (425 aa).

Belongs to the UPF0597 family.

This is UPF0597 protein VF_0641 from Aliivibrio fischeri (strain ATCC 700601 / ES114) (Vibrio fischeri).